The chain runs to 103 residues: Preprofallaxidin-6 (103 aa).

The first 22 residues, 1-22 (MASLKKSLFLVLFLGFVSLSIC), serve as a signal peptide directing secretion. Positions 23-49 (EEEKRENEGNENEEEDENHEEGSEEKR) are excised as a propeptide. Residues 24 to 50 (EEKRENEGNENEEEDENHEEGSEEKRG) form a disordered region. Over residues 31–41 (GNENEEEDENH) the composition is skewed to acidic residues. Leu-65 carries the post-translational modification Leucine amide. Residues 67–103 (KRSEEKRYHPFGKRSEEKRYHPFGKRSEEKRYPPIGK) are disordered. Residues 69–73 (SEEKR) constitute a propeptide that is removed on maturation. The residue at position 77 (Phe-77) is a Phenylalanine amide. The propeptide occupies 81-85 (SEEKR). Phenylalanine amide is present on Phe-89. Residues 93-97 (SEEKR) constitute a propeptide that is removed on maturation. Ile-101 is subject to Isoleucine amide.

The protein belongs to the frog skin active peptide (FSAP) family. Brevinin subfamily. In terms of tissue distribution, expressed by the skin glands.

The protein resides in the secreted. Fallaxidin-1.3 shows no antibacterial activity against Gram-positive or Gram-negative bacteria. Does not inhibit the formation of NO by neuronal nitric oxide synthase. Has no effect on splenocyte proliferation or smooth muscle contraction. Functionally, fallaxidin-1.4 shows no antibacterial activity against Gram-positive or Gram-negative bacteria. Does not inhibit the formation of NO by neuronal nitric oxide synthase. Has no effect on splenocyte proliferation or smooth muscle contraction. Its function is as follows. Fallaxidin-3.1 shows antibacterial activity against the Gram-positive bacteria E.faecalis (MIC=100 uM) and L.lactis (MIC=100 uM). No antibacterial activity against the Gram-positive bacteria B.cereus, L.innocua, M.luteus, S.epidermidis, S.uberis and S.aureus, or the Gram-negative bacteria E.cloacae and E.coli. This chain is Preprofallaxidin-6, found in Litoria fallax (Eastern dwarf tree frog).